The primary structure comprises 1070 residues: [F-actin]-monooxygenase MICAL1 (1070 aa).

Residues 1–489 form a monooxygenase domain region; that stretch reads MASTISTNPA…RDLYDMEAKE (489 aa). FAD contacts are provided by residues cysteine 95, 114–116, 121–123, phenylalanine 181, tyrosine 293, and aspartate 393; these read EKR and RHN. A Phosphothreonine modification is found at threonine 475. Residues 508–612 enclose the Calponin-homology (CH) domain; sequence VGSQEELLRW…YLSHFHSAFK (105 aa). The disordered stretch occupies residues 643–690; sequence QRTRTQENGEDAGGKKPRLEVKAETPSTEEPPVPKPDEPMTPPSQQQD. Residues 646–665 show a composition bias toward basic and acidic residues; that stretch reads RTQENGEDAGGKKPRLEVKA. The span at 671–684 shows a compositional bias: pro residues; that stretch reads EEPPVPKPDEPMTP. The LIM zinc-binding domain maps to 695-757; sequence DLCALCGQHL…LQHLPQTGHE (63 aa). Cysteine 697, cysteine 700, histidine 718, cysteine 721, cysteine 724, cysteine 727, cysteine 747, and histidine 750 together coordinate Zn(2+). Disordered stretches follow at residues 754-838 and 865-887; these read TGHE…RSCS and MEMG…EDVP. A compositionally biased stretch (basic and acidic residues) spans 755–766; that stretch reads GHEEDSSDRGPE. Positions 770–781 are enriched in polar residues; it reads LPMSSENNTPSG. Phosphoserine occurs at positions 793, 875, and 876. Over residues 876–887 the composition is skewed to acidic residues; sequence SEEETEEEEDVP. The important for interaction with RAB8A stretch occupies residues 904 to 1070; the sequence is GTMNNYPTWR…ELASEPGVQG (167 aa). Positions 921 to 1070 constitute a bMERB domain; sequence KEEEMKRFCK…ELASEPGVQG (150 aa). The stretch at 928 to 1030 forms a coiled coil; the sequence is FCKAQAIQRR…EETLKTAADR (103 aa). The residue at position 1060 (serine 1060) is a Phosphoserine.

Belongs to the Mical family. As to quaternary structure, interacts with STK38 and STK38L. Associates with the SH3 domain of NEDD9. Interacts with VIM and PLXNA3. Interacts with RAB1B, RAB8A, RAB10, RAB13 and RAB15 (in their GTP-bound forms); binding to RAB1B is of low affinity compared to other Rab proteins; at least in case of RAB8A and RAB10 can bind 2 molecules of the Rab proteins simultaneously. Interacts with GRAF1/ARHGAP26, GRAF2/ARHGAP10, RAB8A, RAB8B and RAB10; may bind simultaneously to GRAFs and Rabs and connects GRAFs to Rabs. Does not interact with RAB1 and RAB11A. FAD is required as a cofactor.

Its subcellular location is the cytoplasm. The protein localises to the cytoskeleton. The protein resides in the endosome membrane. It localises to the midbody. It carries out the reaction L-methionyl-[F-actin] + NADPH + O2 + H(+) = L-methionyl-(R)-S-oxide-[F-actin] + NADP(+) + H2O. It catalyses the reaction NADPH + O2 + H(+) = H2O2 + NADP(+). In terms of biological role, monooxygenase that promotes depolymerization of F-actin by mediating oxidation of specific methionine residues on actin to form methionine-sulfoxide, resulting in actin filament disassembly and preventing repolymerization. In the absence of actin, it also functions as a NADPH oxidase producing H(2)O(2). Acts as a cytoskeletal regulator that connects NEDD9 to intermediate filaments. Also acts as a negative regulator of apoptosis via its interaction with STK38 and STK38L; acts by antagonizing STK38 and STK38L activation by MST1/STK4. Involved in regulation of lamina-specific connectivity in the nervous system such as the development of lamina-restricted hippocampal connections. Through redox regulation of the actin cytoskeleton controls the intracellular distribution of secretory vesicles containing L1/neurofascin/NgCAM family proteins in neurons, thereby regulating their cell surface levels. May act as Rab effector protein and play a role in vesicle trafficking. Promotes endosomal tubule extension by associating with RAB8 (RAB8A or RAB8B), RAB10 and GRAF (GRAF1/ARHGAP26 or GRAF2/ARHGAP10) on the endosomal membrane which may connect GRAFs to Rabs, thereby participating in neosynthesized Rab8-Rab10-Rab11-dependent protein export. This is [F-actin]-monooxygenase MICAL1 (MICAL1) from Bos taurus (Bovine).